Here is a 495-residue protein sequence, read N- to C-terminus: MRTNPTTSGPAVSTLDEKNLGRIAQIIGPVLDVVFPPGKMPNIYNALVVKGRDTVGQQINVTCEVQQLLGNNRVRAVAMSATDGLTRGMEVIDTGAPLSVPVGGATLGRIFNVLGEPVDNLGPVDTRTTSPIHRSGPAFIQLDTKFSIFETGIKVVDLLAPYRRGGKIGLFGGAGVGKTVLIMELINNIAKAHGGVSVFGGVGERTREGNDLYMEMKESGVINEKNIAESKVALVYGQMNEPPGARMRVGLTALTMAEYFRDVNEQDVLLFIDNIFRFVQAGSEVSALLGRMPSAVGYQPTLSTEMGSLQERITSTKEGSITSIQAVYVPADDLTDPAPATTFAHLDATTVLSRGLAAKGIYPAVDPLDSTSTMLQPGIVGEEHYETAQKVKQTLQRYKELQDIIAILGLDELSEEDRLTVARARKIERFLSQPFFVAEVFTGSPGKYVGLAETVRGFQLILSGELDSLPEQAFYLVGNIDEATAKAMNLEGEKK.

Position 172–179 (172–179 (GGAGVGKT)) interacts with ATP.

This sequence belongs to the ATPase alpha/beta chains family. In terms of assembly, F-type ATPases have 2 components, CF(1) - the catalytic core - and CF(0) - the membrane proton channel. CF(1) has five subunits: alpha(3), beta(3), gamma(1), delta(1), epsilon(1). CF(0) has four main subunits: a(1), b(1), b'(1) and c(9-12).

Its subcellular location is the plastid. The protein localises to the chloroplast thylakoid membrane. It carries out the reaction ATP + H2O + 4 H(+)(in) = ADP + phosphate + 5 H(+)(out). In terms of biological role, produces ATP from ADP in the presence of a proton gradient across the membrane. The catalytic sites are hosted primarily by the beta subunits. This chain is ATP synthase subunit beta, chloroplastic, found in Convallaria majalis (Lily of the valley).